The following is a 277-amino-acid chain: Release factor glutamine methyltransferase (277 aa).

S-adenosyl-L-methionine-binding positions include 117 to 121, Asp-140, Trp-168, and Asn-183; that span reads GTGTG. 183–186 is a substrate binding site; the sequence is NPPY.

Belongs to the protein N5-glutamine methyltransferase family. PrmC subfamily.

The catalysed reaction is L-glutaminyl-[peptide chain release factor] + S-adenosyl-L-methionine = N(5)-methyl-L-glutaminyl-[peptide chain release factor] + S-adenosyl-L-homocysteine + H(+). Functionally, methylates the class 1 translation termination release factors RF1/PrfA and RF2/PrfB on the glutamine residue of the universally conserved GGQ motif. The polypeptide is Release factor glutamine methyltransferase (Shigella dysenteriae serotype 1 (strain Sd197)).